We begin with the raw amino-acid sequence, 435 residues long: Trigger factor (435 aa).

A PPIase FKBP-type domain is found at 163-248 (GDFVTFDFKG…IKEIKVKELP (86 aa)).

It belongs to the FKBP-type PPIase family. Tig subfamily.

The protein resides in the cytoplasm. It carries out the reaction [protein]-peptidylproline (omega=180) = [protein]-peptidylproline (omega=0). In terms of biological role, involved in protein export. Acts as a chaperone by maintaining the newly synthesized protein in an open conformation. Functions as a peptidyl-prolyl cis-trans isomerase. This Citrifermentans bemidjiense (strain ATCC BAA-1014 / DSM 16622 / JCM 12645 / Bem) (Geobacter bemidjiensis) protein is Trigger factor.